Reading from the N-terminus, the 679-residue chain is UvrABC system protein B (679 aa).

The region spanning 31–414 is the Helicase ATP-binding domain; it reads ENLTDGLAHQ…ELEKSGSEII (384 aa). 44-51 lines the ATP pocket; that stretch reads GVTGSGKT. Positions 97–120 match the Beta-hairpin motif; the sequence is YYDYYQPEAYVPSSDTFIEKDASI. The Helicase C-terminal domain occupies 436 to 589; it reads QVDDLLSEAR…QTKYNEEHGI (154 aa). The region spanning 639–674 is the UVR domain; that stretch reads QQQIKKLEQQMYKFAQDLEFEKAAAIRDQLHQLREQ.

The protein belongs to the UvrB family. In terms of assembly, forms a heterotetramer with UvrA during the search for lesions. Interacts with UvrC in an incision complex.

It localises to the cytoplasm. Its function is as follows. The UvrABC repair system catalyzes the recognition and processing of DNA lesions. A damage recognition complex composed of 2 UvrA and 2 UvrB subunits scans DNA for abnormalities. Upon binding of the UvrA(2)B(2) complex to a putative damaged site, the DNA wraps around one UvrB monomer. DNA wrap is dependent on ATP binding by UvrB and probably causes local melting of the DNA helix, facilitating insertion of UvrB beta-hairpin between the DNA strands. Then UvrB probes one DNA strand for the presence of a lesion. If a lesion is found the UvrA subunits dissociate and the UvrB-DNA preincision complex is formed. This complex is subsequently bound by UvrC and the second UvrB is released. If no lesion is found, the DNA wraps around the other UvrB subunit that will check the other stand for damage. The polypeptide is UvrABC system protein B (Haemophilus influenzae (strain ATCC 51907 / DSM 11121 / KW20 / Rd)).